The sequence spans 146 residues: Hemoglobin subunit beta-1 (146 aa).

Residues 2–146 (KWTDKERAVI…VVSALGKQYC (145 aa)) form the Globin domain. Residues His63 and His92 each contribute to the heme b site.

This sequence belongs to the globin family. In terms of assembly, heterotetramer of two alpha chains and two beta chains. Red blood cells.

Functionally, involved in oxygen transport from gills to the various peripheral tissues. The polypeptide is Hemoglobin subunit beta-1 (Lycodes reticulatus (Arctic eelpout)).